Here is a 368-residue protein sequence, read N- to C-terminus: Phosphoserine aminotransferase (368 aa).

L-glutamate is bound at residue Arg44. Pyridoxal 5'-phosphate-binding positions include 78 to 79 (AT), Trp104, Thr157, Asp179, and Gln202. Lys203 carries the post-translational modification N6-(pyridoxal phosphate)lysine. 244-245 (NT) is a pyridoxal 5'-phosphate binding site.

This sequence belongs to the class-V pyridoxal-phosphate-dependent aminotransferase family. SerC subfamily. Homodimer. Requires pyridoxal 5'-phosphate as cofactor.

It is found in the cytoplasm. The enzyme catalyses O-phospho-L-serine + 2-oxoglutarate = 3-phosphooxypyruvate + L-glutamate. It catalyses the reaction 4-(phosphooxy)-L-threonine + 2-oxoglutarate = (R)-3-hydroxy-2-oxo-4-phosphooxybutanoate + L-glutamate. It participates in amino-acid biosynthesis; L-serine biosynthesis; L-serine from 3-phospho-D-glycerate: step 2/3. Its pathway is cofactor biosynthesis; pyridoxine 5'-phosphate biosynthesis; pyridoxine 5'-phosphate from D-erythrose 4-phosphate: step 3/5. Functionally, catalyzes the reversible conversion of 3-phosphohydroxypyruvate to phosphoserine and of 3-hydroxy-2-oxo-4-phosphonooxybutanoate to phosphohydroxythreonine. In Neisseria meningitidis serogroup A / serotype 4A (strain DSM 15465 / Z2491), this protein is Phosphoserine aminotransferase.